Consider the following 494-residue polypeptide: Guanosine-5'-triphosphate,3'-diphosphate pyrophosphatase (494 aa).

This sequence belongs to the GppA/Ppx family. GppA subfamily.

It catalyses the reaction guanosine 3'-diphosphate 5'-triphosphate + H2O = guanosine 3',5'-bis(diphosphate) + phosphate + H(+). It participates in purine metabolism; ppGpp biosynthesis; ppGpp from GTP: step 2/2. Catalyzes the conversion of pppGpp to ppGpp. Guanosine pentaphosphate (pppGpp) is a cytoplasmic signaling molecule which together with ppGpp controls the 'stringent response', an adaptive process that allows bacteria to respond to amino acid starvation, resulting in the coordinated regulation of numerous cellular activities. The chain is Guanosine-5'-triphosphate,3'-diphosphate pyrophosphatase from Escherichia coli (strain 55989 / EAEC).